Consider the following 289-residue polypeptide: Elongation factor Ts (289 aa).

The tract at residues 82-85 (TDFV) is involved in Mg(2+) ion dislocation from EF-Tu.

This sequence belongs to the EF-Ts family.

The protein resides in the cytoplasm. Functionally, associates with the EF-Tu.GDP complex and induces the exchange of GDP to GTP. It remains bound to the aminoacyl-tRNA.EF-Tu.GTP complex up to the GTP hydrolysis stage on the ribosome. The sequence is that of Elongation factor Ts from Chloroherpeton thalassium (strain ATCC 35110 / GB-78).